The chain runs to 223 residues: MNSNVENLPPHIIRLVYKEVTTLTADPPDGIKVFPNEEDLTDLQVTIEGPEGTPYAGGLFRMKLLLGKDFPASPPKGYFLTKIFHPNVGANGEICVNVLKRDWTAELGIRHVLLTIKCLLIHPNPESALNEEAGRLLLENYEEYAARARLLTEIHGGAGGPSGGRPEPGRATASGAAASTADPTAPGGPAGAEGPMAKKHAGERDKKLAAKKKTDKKRALRRL.

Residue M1 is modified to N-acetylmethionine. The UBC core domain occupies H11–G157. The active-site Glycyl thioester intermediate is C95. Positions H155–L223 are disordered. Low complexity predominate over residues G169–P195. Position 174 is a phosphoserine (S174). The segment covering A209 to L223 has biased composition (basic residues).

The protein belongs to the ubiquitin-conjugating enzyme family. As to quaternary structure, component of the APC/C complex, composed of at least 14 distinct subunits that assemble into a complex of at least 19 chains with a combined molecular mass of around 1.2 MDa. Within this complex, directly interacts with ANAPC2 and ANAPC4. Interacts with CDC20, FZR1/CDH1 and VHL. Post-translationally, autoubiquitinated by the APC/C complex during G1, leading to its degradation by the proteasome.

The catalysed reaction is S-ubiquitinyl-[E1 ubiquitin-activating enzyme]-L-cysteine + [E2 ubiquitin-conjugating enzyme]-L-cysteine = [E1 ubiquitin-activating enzyme]-L-cysteine + S-ubiquitinyl-[E2 ubiquitin-conjugating enzyme]-L-cysteine.. The protein operates within protein modification; protein ubiquitination. Functionally, accepts ubiquitin from the E1 complex and catalyzes its covalent attachment to other proteins. Catalyzes 'Lys-11'-linked polyubiquitination. Acts as an essential factor of the anaphase promoting complex/cyclosome (APC/C), a cell cycle-regulated ubiquitin ligase that controls progression through mitosis. Acts by specifically elongating 'Lys-11'-linked polyubiquitin chains initiated by the E2 enzyme UBE2C/UBCH10 on APC/C substrates, enhancing the degradation of APC/C substrates by the proteasome and promoting mitotic exit. Also acts by elongating ubiquitin chains initiated by the E2 enzyme UBE2D1/UBCH5 in vitro; it is however unclear whether UBE2D1/UBCH5 acts as an E2 enzyme for the APC/C in vivo. Also involved in ubiquitination and subsequent degradation of VHL, resulting in an accumulation of HIF1A. In vitro able to promote polyubiquitination using all 7 ubiquitin Lys residues, except 'Lys-48'-linked polyubiquitination. This is Ubiquitin-conjugating enzyme E2 S (UBE2S) from Bos taurus (Bovine).